We begin with the raw amino-acid sequence, 105 residues long: ATP-dependent Clp protease adapter protein ClpS (105 aa).

This sequence belongs to the ClpS family. As to quaternary structure, binds to the N-terminal domain of the chaperone ClpA.

In terms of biological role, involved in the modulation of the specificity of the ClpAP-mediated ATP-dependent protein degradation. The chain is ATP-dependent Clp protease adapter protein ClpS from Aeromonas salmonicida (strain A449).